We begin with the raw amino-acid sequence, 146 residues long: MCHTSCSSGCQPACCAPSPCQPACCVPSSCQASCCVPVGCQSSVCVPVSFKPAVCLPVSCQSSVCVPMSFKSAVCVPVSCQSSVCVPVSCRPIVCAAPSCQSSLCVPVSCRPVVYAAPSCQSSGCCQPSCTSVLCRPISYSISSCC.

23 tandem repeats follow at residues 10–14 (CQPAC), 15–19 (CAPSP), 20–24 (CQPAC), 25–29 (CVPSS), 34–38 (CCVPV), 40–44 (CQSSV), 45–49 (CVPVS), 55–59 (CLPVS), 60–64 (CQSSV), 65–69 (CVPMS), 70–74 (FKSAV), 75–79 (CVPVS), 80–84 (CQSSV), 85–89 (CVPVS), 90–94 (CRPIV), 95–99 (CAAPS), 100–104 (CQSSL), 105–109 (CVPVS), 110–114 (CRPVV), 120–124 (CQSSG), 125–129 (CCQPS), 130–134 (CTSVL), and 135–139 (CRPIS). A 23 X 5 AA approximate repeats region spans residues 10-139 (CQPACCAPSP…CTSVLCRPIS (130 aa)).

The protein belongs to the KRTAP type 12 family. As to quaternary structure, interacts with hair keratins. As to expression, restricted to a narrow region of the hair fiber cuticle, lying approximately 20 cell layers above the apex of the dermal papilla of the hair root; not detected in any other tissues.

Its function is as follows. In the hair cortex, hair keratin intermediate filaments are embedded in an interfilamentous matrix, consisting of hair keratin-associated proteins (KRTAP), which are essential for the formation of a rigid and resistant hair shaft through their extensive disulfide bond cross-linking with abundant cysteine residues of hair keratins. The matrix proteins include the high-sulfur and high-glycine-tyrosine keratins. The protein is Keratin-associated protein 12-2 (KRTAP12-2) of Homo sapiens (Human).